Here is a 370-residue protein sequence, read N- to C-terminus: Glutamate 5-kinase (370 aa).

Lys-17 contacts ATP. Ser-57, Asp-144, and Asn-156 together coordinate substrate. ATP contacts are provided by residues 176–177 (SD) and 220–226 (TGGMASK). The PUA domain occupies 282-360 (AGALTLDDGA…HELPVEMRRP (79 aa)).

This sequence belongs to the glutamate 5-kinase family.

It is found in the cytoplasm. It catalyses the reaction L-glutamate + ATP = L-glutamyl 5-phosphate + ADP. It functions in the pathway amino-acid biosynthesis; L-proline biosynthesis; L-glutamate 5-semialdehyde from L-glutamate: step 1/2. In terms of biological role, catalyzes the transfer of a phosphate group to glutamate to form L-glutamate 5-phosphate. The sequence is that of Glutamate 5-kinase from Mycolicibacterium smegmatis (strain ATCC 700084 / mc(2)155) (Mycobacterium smegmatis).